Here is a 68-residue protein sequence, read N- to C-terminus: Small ribosomal subunit protein bS18c (68 aa).

This sequence belongs to the bacterial ribosomal protein bS18 family. Part of the 30S ribosomal subunit.

The protein localises to the plastid. It localises to the chloroplast. The sequence is that of Small ribosomal subunit protein bS18c (rps18) from Cyanidium caldarium (Red alga).